Here is a 441-residue protein sequence, read N- to C-terminus: Squalene synthase (441 aa).

2 helical membrane passes run 293-313 (SFQF…LVFG) and 420-440 (FKFN…YWYA).

It belongs to the phytoene/squalene synthase family. Mg(2+) is required as a cofactor.

The protein resides in the endoplasmic reticulum membrane. The catalysed reaction is 2 (2E,6E)-farnesyl diphosphate + NADPH + H(+) = squalene + 2 diphosphate + NADP(+). It catalyses the reaction 2 (2E,6E)-farnesyl diphosphate + NADH + H(+) = squalene + 2 diphosphate + NAD(+). The protein operates within terpene metabolism; lanosterol biosynthesis; lanosterol from farnesyl diphosphate: step 1/3. Functionally, catalyzes the condensation of 2 two farnesyl pyrophosphate moieties to form squalene. It is the first committed enzyme of the sterol biosynthesis pathway. Required for the biosynthesis of ergosterol. The polypeptide is Squalene synthase (ERG9) (Eremothecium gossypii (strain ATCC 10895 / CBS 109.51 / FGSC 9923 / NRRL Y-1056) (Yeast)).